Consider the following 257-residue polypeptide: NAD-capped RNA hydrolase NudC (257 aa).

The substrate site is built by lysine 25 and arginine 69. 2 residues coordinate Zn(2+): cysteine 98 and cysteine 101. A substrate-binding site is contributed by glutamate 111. Zn(2+) contacts are provided by cysteine 116 and cysteine 119. Tyrosine 124 contacts substrate. The Nudix hydrolase domain maps to proline 125 to threonine 248. The a divalent metal cation site is built by alanine 158, glutamate 174, and glutamate 178. A Nudix box motif is present at residues glycine 159–glycine 180. Glutamine 192–serine 199 is a binding site for substrate. Glutamate 219 serves as a coordination point for a divalent metal cation. Alanine 241 contacts substrate.

The protein belongs to the Nudix hydrolase family. NudC subfamily. In terms of assembly, homodimer. It depends on Mg(2+) as a cofactor. Requires Mn(2+) as cofactor. Zn(2+) is required as a cofactor.

The enzyme catalyses a 5'-end NAD(+)-phospho-ribonucleoside in mRNA + H2O = a 5'-end phospho-adenosine-phospho-ribonucleoside in mRNA + beta-nicotinamide D-ribonucleotide + 2 H(+). The catalysed reaction is NAD(+) + H2O = beta-nicotinamide D-ribonucleotide + AMP + 2 H(+). It catalyses the reaction NADH + H2O = reduced beta-nicotinamide D-ribonucleotide + AMP + 2 H(+). Functionally, mRNA decapping enzyme that specifically removes the nicotinamide adenine dinucleotide (NAD) cap from a subset of mRNAs by hydrolyzing the diphosphate linkage to produce nicotinamide mononucleotide (NMN) and 5' monophosphate mRNA. The NAD-cap is present at the 5'-end of some mRNAs and stabilizes RNA against 5'-processing. Has preference for mRNAs with a 5'-end purine. Catalyzes the hydrolysis of a broad range of dinucleotide pyrophosphates. This is NAD-capped RNA hydrolase NudC from Escherichia coli O7:K1 (strain IAI39 / ExPEC).